A 285-amino-acid chain; its full sequence is Cell division protein ZipA (285 aa).

M1 is a topological domain (periplasmic). The helical transmembrane segment at 2-22 (EIGLREWLIVIGIVVIGGILF) threads the bilayer. Over 23–285 (DGWRRMRGSK…FERRQLTHKR (263 aa)) the chain is Cytoplasmic. The segment at 49-88 (AVSENSELLGPSRSVDFPQGAGFEPDEENLPSLSVRGPSR) is disordered.

Belongs to the ZipA family. Interacts with FtsZ via their C-terminal domains.

The protein localises to the cell inner membrane. Essential cell division protein that stabilizes the FtsZ protofilaments by cross-linking them and that serves as a cytoplasmic membrane anchor for the Z ring. Also required for the recruitment to the septal ring of downstream cell division proteins. This Azotobacter vinelandii (strain DJ / ATCC BAA-1303) protein is Cell division protein ZipA.